The following is a 314-amino-acid chain: Acetaldehyde dehydrogenase 2 (314 aa).

11 to 14 (SGNI) contacts NAD(+). Cys-129 functions as the Acyl-thioester intermediate in the catalytic mechanism. NAD(+) is bound by residues 160 to 168 (SAGPGTRAN) and Asn-291.

Belongs to the acetaldehyde dehydrogenase family.

It catalyses the reaction acetaldehyde + NAD(+) + CoA = acetyl-CoA + NADH + H(+). The protein is Acetaldehyde dehydrogenase 2 of Rhodococcus erythropolis (strain PR4 / NBRC 100887).